A 74-amino-acid chain; its full sequence is RNA-binding protein Hfq (74 aa).

One can recognise a Sm domain in the interval 9 to 69; the sequence is DQFLNQLRKD…ISTFAPEKNV (61 aa).

Belongs to the Hfq family. In terms of assembly, homohexamer.

Its function is as follows. RNA chaperone that binds small regulatory RNA (sRNAs) and mRNAs to facilitate mRNA translational regulation in response to envelope stress, environmental stress and changes in metabolite concentrations. Also binds with high specificity to tRNAs. This chain is RNA-binding protein Hfq, found in Geobacillus sp. (strain WCH70).